A 417-amino-acid polypeptide reads, in one-letter code: NADH-quinone oxidoreductase subunit D (417 aa).

This sequence belongs to the complex I 49 kDa subunit family. In terms of assembly, NDH-1 is composed of 14 different subunits. Subunits NuoB, C, D, E, F, and G constitute the peripheral sector of the complex.

Its subcellular location is the cell inner membrane. The catalysed reaction is a quinone + NADH + 5 H(+)(in) = a quinol + NAD(+) + 4 H(+)(out). Its function is as follows. NDH-1 shuttles electrons from NADH, via FMN and iron-sulfur (Fe-S) centers, to quinones in the respiratory chain. The immediate electron acceptor for the enzyme in this species is believed to be ubiquinone. Couples the redox reaction to proton translocation (for every two electrons transferred, four hydrogen ions are translocated across the cytoplasmic membrane), and thus conserves the redox energy in a proton gradient. The chain is NADH-quinone oxidoreductase subunit D from Cupriavidus metallidurans (strain ATCC 43123 / DSM 2839 / NBRC 102507 / CH34) (Ralstonia metallidurans).